Here is a 211-residue protein sequence, read N- to C-terminus: NEDD4 family-interacting protein 1 (211 aa).

Residues 1-13 (MSEQSSSRYQQLQ) are compositionally biased toward polar residues. The interval 1 to 48 (MSEQSSSRYQQLQNEEEPGENPQASTDAPPPYSSIAGESSGLFDYKDE) is disordered. Residues 1–106 (MSEQSSSRYQ…ADQLRIGNDG (106 aa)) are Cytoplasmic-facing. 2 short sequence motifs (PPxY motif) span residues 29-32 (PPPY) and 54-57 (PPSY). The helical transmembrane segment at 107–127 (IFMLTFFMAFLFNWIGFFLSF) threads the bilayer. Topologically, residues 128–133 (CLTSSA) are extracellular. Residues 134 to 154 (AGRYGAISGFGLSLIKWILIV) form a helical membrane-spanning segment. The Cytoplasmic segment spans residues 155–162 (RFSTYFPG). The chain crosses the membrane as a helical span at residues 163–183 (YFDGQYWLWWVFLVLGFLLFL). At 184–211 (RGFINYAKVRKMPDNFSTLPRTRVLFIY) the chain is on the extracellular side.

The protein resides in the golgi apparatus membrane. Its function is as follows. May play a role in Golgi structure maintenance. This chain is NEDD4 family-interacting protein 1 (ndfip1), found in Xenopus tropicalis (Western clawed frog).